The sequence spans 197 residues: Guanylate kinase (197 aa).

In terms of domain architecture, Guanylate kinase-like spans 7 to 185 (GLIIILSSPS…TLKKIHEIIV (179 aa)). 14-21 (SPSGTGKS) lines the ATP pocket.

It belongs to the guanylate kinase family.

The protein localises to the cytoplasm. The enzyme catalyses GMP + ATP = GDP + ADP. Functionally, essential for recycling GMP and indirectly, cGMP. In Rickettsia typhi (strain ATCC VR-144 / Wilmington), this protein is Guanylate kinase.